An 885-amino-acid polypeptide reads, in one-letter code: Envelope glycoprotein gp160 (885 aa).

The N-terminal stretch at 1–23 (MGCLGNQLLIALLLVSVLEICCV) is a signal peptide. The Extracellular segment spans residues 24-700 (QYVTVFYGVP…TSWIRYIQYG (677 aa)). An N-linked (GlcNAc...) asparagine; by host glycan is attached at Asn-37. Cys-44 and Cys-57 are joined by a disulfide. Asn-70, Asn-114, Asn-148, Asn-156, Asn-173, Asn-186, Asn-201, Asn-213, Asn-245, Asn-255, Asn-279, Asn-285, Asn-296, Asn-307, Asn-317, Asn-372, and Asn-378 each carry an N-linked (GlcNAc...) asparagine; by host glycan. Intrachain disulfides connect Cys-101/Cys-221, Cys-108/Cys-212, Cys-113/Cys-170, Cys-234/Cys-264, and Cys-244/Cys-256. Positions 113-169 (CNKTETDRWGLTGNAGTTTTAITTTATPSVAENVINESNPCIKNNSCAGLEQEPMIG) are V1. The tract at residues 170–212 (CKFNMTGLNRDKKKEYNETWYSRDLICEQSANESESKCYMHHC) is V2. The tract at residues 312–344 (CRRPENKTVLPVTIMSGLVFHSQPINERPKQAW) is V3. Cysteines 312 and 345 form a disulfide. 2 disulfides stabilise this stretch: Cys-396–Cys-465 and Cys-403–Cys-438. The segment at 403-438 (CKMNWFLNWVEDRDQKGGRWKQQNRKEQQKKNYVPC) is V4. 3 N-linked (GlcNAc...) asparagine; by host glycosylation sites follow: Asn-466, Asn-482, and Asn-485. The V5 stretch occupies residues 481-488 (SNETNITM). Residues 532–552 (GVFVLGFLGFLATAGSAMGAA) form a fusion peptide region. The segment at 595 to 611 (LQTRVTAIEKYLKDQAQ) is immunosuppression. 3 N-linked (GlcNAc...) asparagine; by host glycosylation sites follow: Asn-631, Asn-640, and Asn-656. A coiled-coil region spans residues 640 to 672 (NMTWQEWERQVDFLEANITQLLEEAQIQQEKNM). Residues 677-698 (KLNSWDIFGNWFDLTSWIRYIQ) form an MPER; binding to GalCer region. The chain crosses the membrane as a helical span at residues 701–721 (VLIVLGVIGLRIVIYVVQMLA). Topologically, residues 722 to 885 (RLRQGYRPVF…IRQGLELTLL (164 aa)) are cytoplasmic. A YXXV motif; contains endocytosis signal motif is present at residues 727 to 730 (YRPV). The disordered stretch occupies residues 743-764 (IHKGQEPPTKEGEEGDGGDRGG). Residues 745–764 (KGQEPPTKEGEEGDGGDRGG) show a composition bias toward basic and acidic residues. Residue Cys-793 is the site of S-palmitoyl cysteine; by host attachment. The short motif at 884-885 (LL) is the Di-leucine internalization motif element.

In terms of assembly, the mature envelope protein (Env) consists of a homotrimer of non-covalently associated gp120-gp41 heterodimers. The resulting complex protrudes from the virus surface as a spike. Interacts with host CD4 and CCR5. Gp120 also interacts with the C-type lectins CD209/DC-SIGN and CLEC4M/DC-SIGNR (collectively referred to as DC-SIGN(R)). As to quaternary structure, the mature envelope protein (Env) consists of a homotrimer of non-covalently associated gp120-gp41 heterodimers. The resulting complex protrudes from the virus surface as a spike. In terms of processing, specific enzymatic cleavages in vivo yield mature proteins. Envelope glycoproteins are synthesized as an inactive precursor that is heavily N-glycosylated and processed likely by host cell furin in the Golgi to yield the mature SU and TM proteins. The cleavage site between SU and TM requires the minimal sequence [KR]-X-[KR]-R. Post-translationally, palmitoylation of the transmembrane protein and of Env polyprotein (prior to its proteolytic cleavage) is essential for their association with host cell membrane lipid rafts. Palmitoylation is therefore required for envelope trafficking to classical lipid rafts, but not for viral replication.

Its subcellular location is the virion membrane. It is found in the host cell membrane. The protein resides in the host endosome membrane. Its function is as follows. The surface protein gp120 (SU) attaches the virus to the host lymphoid cell by binding to the primary receptor CD4. This interaction induces a structural rearrangement creating a high affinity binding site for a chemokine coreceptor like CCR5. This peculiar 2 stage receptor-interaction strategy allows gp120 to maintain the highly conserved coreceptor-binding site in a cryptic conformation, protected from neutralizing antibodies. These changes are transmitted to the transmembrane protein gp41 and are thought to activate its fusogenic potential by unmasking its fusion peptide. In terms of biological role, surface protein gp120 (SU) may target the virus to gut-associated lymphoid tissue (GALT) by binding host ITGA4/ITGB7 (alpha-4/beta-7 integrins), a complex that mediates T-cell migration to the GALT. Interaction between gp120 and ITGA4/ITGB7 would allow the virus to enter GALT early in the infection, infecting and killing most of GALT's resting CD4+ T-cells. This T-cell depletion is believed to be the major insult to the host immune system leading to AIDS. Functionally, the surface protein gp120 is a ligand for CD209/DC-SIGN and CLEC4M/DC-SIGNR, which are respectively found on dendritic cells (DCs), and on endothelial cells of liver sinusoids and lymph node sinuses. These interactions allow capture of viral particles at mucosal surfaces by these cells and subsequent transmission to permissive cells. DCs are professional antigen presenting cells, critical for host immunity by inducing specific immune responses against a broad variety of pathogens. They act as sentinels in various tissues where they take up antigen, process it, and present it to T-cells following migration to lymphoid organs. SIV subverts the migration properties of dendritic cells to gain access to CD4+ T-cells in lymph nodes. Virus transmission to permissive T-cells occurs either in trans (without DCs infection, through viral capture and transmission), or in cis (following DCs productive infection, through the usual CD4-gp120 interaction), thereby inducing a robust infection. In trans infection, bound virions remain infectious over days and it is proposed that they are not degraded, but protected in non-lysosomal acidic organelles within the DCs close to the cell membrane thus contributing to the viral infectious potential during DCs' migration from the periphery to the lymphoid tissues. On arrival at lymphoid tissues, intact virions recycle back to DCs' cell surface allowing virus transmission to CD4+ T-cells. Virion capture also seems to lead to MHC-II-restricted viral antigen presentation, and probably to the activation of SIV-specific CD4+ cells. The transmembrane protein gp41 (TM) acts as a class I viral fusion protein. Under the current model, the protein has at least 3 conformational states: pre-fusion native state, pre-hairpin intermediate state, and post-fusion hairpin state. During fusion of viral and target intracellular membranes, the coiled coil regions (heptad repeats) assume a trimer-of-hairpins structure, positioning the fusion peptide in close proximity to the C-terminal region of the ectodomain. The formation of this structure appears to drive apposition and subsequent fusion of viral and target cell membranes. Complete fusion occurs in host cell endosomes. The virus undergoes clathrin-dependent internalization long before endosomal fusion, thus minimizing the surface exposure of conserved viral epitopes during fusion and reducing the efficacy of inhibitors targeting these epitopes. Membranes fusion leads to delivery of the nucleocapsid into the cytoplasm. Its function is as follows. The envelope glycoprotein gp160 precursor down-modulates cell surface CD4 antigen by interacting with it in the endoplasmic reticulum and blocking its transport to the cell surface. In terms of biological role, the gp120-gp41 heterodimer allows rapid transcytosis of the virus through CD4 negative cells such as simple epithelial monolayers of the intestinal, rectal and endocervical epithelial barriers. Both gp120 and gp41 specifically recognize glycosphingolipids galactosyl-ceramide (GalCer) or 3' sulfo-galactosyl-ceramide (GalS) present in the lipid rafts structures of epithelial cells. Binding to these alternative receptors allows the rapid transcytosis of the virus through the epithelial cells. This transcytotic vesicle-mediated transport of virions from the apical side to the basolateral side of the epithelial cells does not involve infection of the cells themselves. This Cercopithecidae (Old World monkeys) protein is Envelope glycoprotein gp160 (env).